A 121-amino-acid chain; its full sequence is Ribosome-binding factor A (121 aa).

This sequence belongs to the RbfA family. As to quaternary structure, monomer. Binds 30S ribosomal subunits, but not 50S ribosomal subunits or 70S ribosomes.

It localises to the cytoplasm. One of several proteins that assist in the late maturation steps of the functional core of the 30S ribosomal subunit. Associates with free 30S ribosomal subunits (but not with 30S subunits that are part of 70S ribosomes or polysomes). Required for efficient processing of 16S rRNA. May interact with the 5'-terminal helix region of 16S rRNA. The polypeptide is Ribosome-binding factor A (Lactobacillus helveticus (strain DPC 4571)).